A 707-amino-acid polypeptide reads, in one-letter code: D-(-)-3-hydroxybutyrate oligomer hydrolase (707 aa).

A signal peptide spans 1–24; the sequence is MHHDNFRRLGNAAFAAAAALLAVA. Serine 311 serves as the catalytic Charge relay system.

It belongs to the D-(-)-3-hydroxybutyrate oligomer hydrolase family.

The protein resides in the secreted. It carries out the reaction (3R)-hydroxybutanoate dimer + H2O = 2 (R)-3-hydroxybutanoate + H(+). The protein operates within lipid metabolism; butanoate metabolism. In terms of biological role, participates in the degradation of poly-3-hydroxybutyrate (PHB). It works downstream of poly(3-hydroxybutyrate) depolymerase, hydrolyzing D(-)-3-hydroxybutyrate oligomers of various length (3HB-oligomers) into 3HB-monomers. The sequence is that of D-(-)-3-hydroxybutyrate oligomer hydrolase from Cupriavidus pinatubonensis (strain JMP 134 / LMG 1197) (Cupriavidus necator (strain JMP 134)).